The following is a 133-amino-acid chain: Small ribosomal subunit protein uS11 (133 aa).

Positions 114–133 (VTPIPHDGTRPPGGKRGRRV) are disordered.

It belongs to the universal ribosomal protein uS11 family. As to quaternary structure, part of the 30S ribosomal subunit.

Its function is as follows. Located on the platform of the 30S subunit. The polypeptide is Small ribosomal subunit protein uS11 (Archaeoglobus fulgidus (strain ATCC 49558 / DSM 4304 / JCM 9628 / NBRC 100126 / VC-16)).